Here is a 43-residue protein sequence, read N- to C-terminus: Myotoxin-2 (43 aa).

Cystine bridges form between Cys-4-Cys-36, Cys-11-Cys-30, and Cys-18-Cys-37.

It belongs to the crotamine-myotoxin family. In terms of assembly, monomer. Expressed by the venom gland.

It is found in the secreted. Functionally, cationic peptide that possesses multiple functions. It acts as a cell-penetrating peptide (CPP), and as a potent voltage-gated potassium channel (Kv) inhibitor. It exhibits antimicrobial activities, hind limb paralysis, and severe muscle necrosis by a non-enzymatic mechanism. The chain is Myotoxin-2 from Crotalus concolor (Midget faded rattlesnake).